The chain runs to 284 residues: Pollen allergen Phl p 5b (284 aa).

A signal peptide spans 1-19; it reads AAAAVPRRGPRGGPGRSYT. The disordered stretch occupies residues 1-21; sequence AAAAVPRRGPRGGPGRSYTAD.

Belongs to the Poa p IX/Phl p VI allergen family. Homodimer; disulfide-linked.

Functionally, has ribonuclease activity. May be involved in host-pathogen interactions. This is Pollen allergen Phl p 5b from Phleum pratense (Common timothy).